The chain runs to 238 residues: MGRKWANIVAKKTAKDGATSKVYAKFGVEIYAAAKQGEPDPESNSSLKFVIERAKQAQVPKHVIDKAIDKAKGGGDETFVQGRYEGFGPNGSMVIAETLTSNVNRTIANVRTTFHKNGGNIGAAGAVSYMFDNTGVIVFEGTDPDHIFEILLDAEVDVRDVTEEEGNIVVYTEPTDLHKGIAALKAAGITEFSTTELEMIAQSEVELSPEDLEIFEGLVDALEDDDDVQKVYHNVANL.

Belongs to the TACO1 family. YeeN subfamily.

Its subcellular location is the cytoplasm. In Lactococcus lactis subsp. cremoris (strain MG1363), this protein is Probable transcriptional regulatory protein llmg_0242.